The following is a 1187-amino-acid chain: MPFGLKLRRTRRYNVLSKNCFVTRIRLLDSNVIECTLSVESTGQECLEAVAQRLELRETHYFGLWFLSKSQQARWVELEKPLKKHLDKFANEPLLFFGVMFYVPNVSWLQQEATRYQYYLQVKKDVLEGRLRCTLDQVIRLAGLAVQADFGDYNQFDSQDFLREYVLFPMDLALEEAVLEELTQKVAQEHKAHSGILPAEAELMYINEVERLDGFGQEIFPVKDNHGNCVHLGIFFMGIFVRNRIGRQAVIYRWNDMGNITHNKSTILVELINKEETALFHTDDIENAKYISRLFATRHKFYKQNKICTEQSNSPPPIRRQPTWSRSSLPRQQPYILPPVHVQCGEHYSETHTSQDSIFHGNEEALYCNSHNSLDLNYLNGTVTNGSVCSVHSVNSLNCSQSFIQASPVSSNLSIPGSDIMRADYIPSHRHSAIIVPSYRPTPDYETVMRQMKRGILHTDSQSQSLRNLNIINTHAYNQPEDLVYSQPEMRERHPYTVPYGPQGVYSNKLVSPSDQRNPKNNVVPSKPGASAISHTVSTPELANMQLQGSHNYSTAHMLKNYLFRPPPPYPRPRPATSTPDLASHRHKYVSGSSPDLVTRKVQLSVKTFQEDSSPVVHQSLQEVSEPLTATKHHGTVNKRHSLEVMNSMVRGMEAMTLKSLHLPMARRNTLREQGPPEEGSGSHEVPQLPQYHHKKTFSDATMLIHSSESEEEEEEAPESVPQIPMLREKMEYSAQLQAALARIPNKPPPEYPGPRKSVSNGALRQDQASLPPAMARARVLRHGPAKAISMSRTDPPAVNGASLGPSISEPDLTSVKERVKKEPVKERPVSEMFSLEDSIIEREMMIRNLEKQKMAGLEAQKRPLMLAALNGLSVARVSGREENRVDATRVPMDERFRTLKKKLEEGMVFTEYEQIPKKKANGIFSTAALPENAERSRIREVVPYEENRVELIPTKENNTGYINASHIKVVVGGAEWHYIATQGPLPHTCHDFWQMVWEQGVNVIAMVTAEEEGGRTKSHRYWPKLGSKHSSATYGKFKVTTKFRTDSVCYATTGLKVKHLLSGQERTVWHLQYTDWPDHGCPEDVQGFLSYLEEIQSVRRHTNSMLEGTKNRHPPIVVHCSAGVGRTGVLILSELMIYCLEHNEKVEVPMMLRLLREQRMFMIQTIAQYKFVYQVLIQFLQNSRLI.

In terms of domain architecture, FERM spans 21 to 306 (FVTRIRLLDS…TRHKFYKQNK (286 aa)). Phosphoserine is present on residues Ser-314, Ser-461, and Ser-486. Residues 510 to 524 (LVSPSDQRNPKNNVV) are compositionally biased toward polar residues. Residues 510 to 531 (LVSPSDQRNPKNNVVPSKPGAS) form a disordered region. A phosphoserine mark is found at Ser-591, Ser-593, Ser-594, and Ser-642. Disordered stretches follow at residues 671 to 690 (LREQGPPEEGSGSHEVPQLP) and 787 to 824 (KAISMSRTDPPAVNGASLGPSISEPDLTSVKERVKKEP). A compositionally biased stretch (basic and acidic residues) spans 815–824 (SVKERVKKEP). Ser-831 bears the Phosphoserine mark. Residues 909-1180 (VFTEYEQIPK…KFVYQVLIQF (272 aa)) enclose the Tyrosine-protein phosphatase domain. Substrate contacts are provided by residues Asp-1079, 1121-1127 (CSAGVGR), and Gln-1165. Catalysis depends on Cys-1121, which acts as the Phosphocysteine intermediate.

This sequence belongs to the protein-tyrosine phosphatase family. Non-receptor class subfamily. As to quaternary structure, interacts with FLT4; the interaction is enhanced by stimulation with VEGFC. Interacts (via PPxY motifs) with YAP1 (via WW domains); this interaction leads to the cytoplasmic sequestration of YAP1 and inhibits its transcriptional co-activator activity. Ubiquitinated by the ECS (Elongin BC-CUL2/5-SOCS-box protein)/LRR1 E3 ligase complex and subsequently targeted to proteasomal degradation. Ubiquitous.

It localises to the cytoplasm. Its subcellular location is the cytoskeleton. The protein localises to the nucleus. It carries out the reaction O-phospho-L-tyrosyl-[protein] + H2O = L-tyrosyl-[protein] + phosphate. In terms of biological role, protein tyrosine phosphatase which may play a role in the regulation of lymphangiogenesis, cell-cell adhesion, cell-matrix adhesion, cell migration, cell growth and also regulates TGF-beta gene expression, thereby modulating epithelial-mesenchymal transition. Mediates beta-catenin dephosphorylation at adhesion junctions. Acts as a negative regulator of the oncogenic property of YAP, a downstream target of the hippo pathway, in a cell density-dependent manner. May function as a tumor suppressor. This is Tyrosine-protein phosphatase non-receptor type 14 (PTPN14) from Homo sapiens (Human).